The chain runs to 63 residues: Cytochrome c oxidase subunit 7C, mitochondrial (63 aa).

A mitochondrion-targeting transit peptide spans 1 to 16; it reads MLGQSIRRFTTSVVRR. Residues 17-33 are Mitochondrial matrix-facing; that stretch reads SHYEEGPGKNLPFSVEN. At Lys-25 the chain carries N6-acetyllysine; alternate. Lys-25 is subject to N6-succinyllysine; alternate. The chain crosses the membrane as a helical span at residues 34–60; that stretch reads KWSLLAKMCLYFGSAFATPFLIVRHQL. At 61-63 the chain is on the mitochondrial intermembrane side; it reads LKT.

This sequence belongs to the cytochrome c oxidase VIIc family. As to quaternary structure, component of the cytochrome c oxidase (complex IV, CIV), a multisubunit enzyme composed of 14 subunits. The complex is composed of a catalytic core of 3 subunits MT-CO1, MT-CO2 and MT-CO3, encoded in the mitochondrial DNA, and 11 supernumerary subunits COX4I, COX5A, COX5B, COX6A, COX6B, COX6C, COX7A, COX7B, COX7C, COX8 and NDUFA4, which are encoded in the nuclear genome. The complex exists as a monomer or a dimer and forms supercomplexes (SCs) in the inner mitochondrial membrane with NADH-ubiquinone oxidoreductase (complex I, CI) and ubiquinol-cytochrome c oxidoreductase (cytochrome b-c1 complex, complex III, CIII), resulting in different assemblies (supercomplex SCI(1)III(2)IV(1) and megacomplex MCI(2)III(2)IV(2)). Interacts with RAB5IF.

It localises to the mitochondrion inner membrane. Its pathway is energy metabolism; oxidative phosphorylation. Functionally, component of the cytochrome c oxidase, the last enzyme in the mitochondrial electron transport chain which drives oxidative phosphorylation. The respiratory chain contains 3 multisubunit complexes succinate dehydrogenase (complex II, CII), ubiquinol-cytochrome c oxidoreductase (cytochrome b-c1 complex, complex III, CIII) and cytochrome c oxidase (complex IV, CIV), that cooperate to transfer electrons derived from NADH and succinate to molecular oxygen, creating an electrochemical gradient over the inner membrane that drives transmembrane transport and the ATP synthase. Cytochrome c oxidase is the component of the respiratory chain that catalyzes the reduction of oxygen to water. Electrons originating from reduced cytochrome c in the intermembrane space (IMS) are transferred via the dinuclear copper A center (CU(A)) of subunit 2 and heme A of subunit 1 to the active site in subunit 1, a binuclear center (BNC) formed by heme A3 and copper B (CU(B)). The BNC reduces molecular oxygen to 2 water molecules using 4 electrons from cytochrome c in the IMS and 4 protons from the mitochondrial matrix. The chain is Cytochrome c oxidase subunit 7C, mitochondrial (COX7C) from Pongo pygmaeus (Bornean orangutan).